We begin with the raw amino-acid sequence, 254 residues long: 4-hydroxy-tetrahydrodipicolinate reductase (254 aa).

7–12 is a binding site for NAD(+); the sequence is GASGRI. Residue Arg-35 coordinates NADP(+). Residues 91 to 93 and 115 to 118 contribute to the NAD(+) site; these read GTT and AHNM. His-147 (proton donor/acceptor) is an active-site residue. His-148 serves as a coordination point for (S)-2,3,4,5-tetrahydrodipicolinate. Lys-151 acts as the Proton donor in catalysis. 157–158 contributes to the (S)-2,3,4,5-tetrahydrodipicolinate binding site; the sequence is GT.

It belongs to the DapB family.

The protein localises to the cytoplasm. It carries out the reaction (S)-2,3,4,5-tetrahydrodipicolinate + NAD(+) + H2O = (2S,4S)-4-hydroxy-2,3,4,5-tetrahydrodipicolinate + NADH + H(+). The enzyme catalyses (S)-2,3,4,5-tetrahydrodipicolinate + NADP(+) + H2O = (2S,4S)-4-hydroxy-2,3,4,5-tetrahydrodipicolinate + NADPH + H(+). It participates in amino-acid biosynthesis; L-lysine biosynthesis via DAP pathway; (S)-tetrahydrodipicolinate from L-aspartate: step 4/4. Catalyzes the conversion of 4-hydroxy-tetrahydrodipicolinate (HTPA) to tetrahydrodipicolinate. The chain is 4-hydroxy-tetrahydrodipicolinate reductase from Helicobacter pylori (strain Shi470).